A 147-amino-acid polypeptide reads, in one-letter code: Large ribosomal subunit protein uL15 (147 aa).

The span at 1–20 (MTLRLNDLKPADGARTERTR) shows a compositional bias: basic and acidic residues. The tract at residues 1–61 (MTLRLNDLKP…GFEGGQTPMQ (61 aa)) is disordered. Over residues 23–33 (RGIGSGLGKTA) the composition is skewed to gly residues. Residues 34 to 47 (GRGHKGSFARKGGG) show a composition bias toward basic residues.

The protein belongs to the universal ribosomal protein uL15 family. Part of the 50S ribosomal subunit.

Binds to the 23S rRNA. This Xanthomonas euvesicatoria pv. vesicatoria (strain 85-10) (Xanthomonas campestris pv. vesicatoria) protein is Large ribosomal subunit protein uL15.